The chain runs to 397 residues: uncharacterized protein (397 aa).

A run of 12 helical transmembrane segments spans residues 10 to 30, 48 to 68, 76 to 96, 106 to 126, 141 to 161, 165 to 185, 209 to 229, 242 to 262, 274 to 294, 296 to 316, 334 to 354, and 363 to 383; these read FIIF…YAVM, GLLV…VTII, PVLL…ALAP, ILSA…ASEM, GGLT…GDVL, AVFS…MAAV, LFSF…YTFI, VGIT…NFFA, MIGV…IAIY, AAAI…PPLL, VSVS…GMIL, and LFAG…FAHL.

This sequence belongs to the major facilitator superfamily.

It localises to the cell membrane. This is an uncharacterized protein from Bacillus subtilis (strain 168).